We begin with the raw amino-acid sequence, 327 residues long: PDZ and LIM domain protein 1 (327 aa).

The residue at position 2 (Thr2) is an N-acetylthreonine. A PDZ domain is found at 3 to 85 (TQQIVLQGPG…NMTLTVSRSE (83 aa)). Ser90 and Ser130 each carry phosphoserine. Tyr142 carries the phosphotyrosine modification. Residues 161 to 186 (VESKTSASGEEANSRPSAQPHPSGGL) are disordered. Residues 256-315 (PICDKCGTGIVGVFVKLRDHHRHPECYVCTDCGINLKQKGHFFVGDQIYCEKHARERVTP) enclose the LIM zinc-binding domain. Zn(2+)-binding residues include Cys258, Cys261, His278, Cys281, Cys284, Cys287, Cys305, and His308. Residue Thr314 is modified to Phosphothreonine. Tyr319 bears the Phosphotyrosine mark.

As to quaternary structure, interacts with ACTN1. Interacts with ACTN2 and ACTN4. Interacts with PDLIM4. In terms of tissue distribution, expressed most abundantly in heart, lung and liver, moderately in spleen and skeletal muscle, and at extremely low levels (if at all) in testis and brain tissues.

The protein localises to the cytoplasm. Its subcellular location is the cytoskeleton. It localises to the myofibril. The protein resides in the sarcomere. It is found in the z line. Functionally, cytoskeletal protein that may act as an adapter that brings other proteins (like kinases) to the cytoskeleton. Involved in assembly, disassembly and directioning of stress fibers in fibroblasts. Required for the localization of ACTN1 and PALLD to stress fibers. Required for cell migration and in maintaining cell polarity of fibroblasts. The chain is PDZ and LIM domain protein 1 (Pdlim1) from Rattus norvegicus (Rat).